Consider the following 631-residue polypeptide: Phosphomethylpyrimidine synthase (631 aa).

Substrate contacts are provided by residues Asn-239, Met-268, Tyr-297, His-333, 353–355 (SRG), 394–397 (DGLR), and Glu-433. His-437 contacts Zn(2+). Substrate is bound at residue Tyr-460. His-501 lines the Zn(2+) pocket. Positions 581, 584, and 589 each coordinate [4Fe-4S] cluster.

It belongs to the ThiC family. As to quaternary structure, homodimer. The cofactor is [4Fe-4S] cluster.

It catalyses the reaction 5-amino-1-(5-phospho-beta-D-ribosyl)imidazole + S-adenosyl-L-methionine = 4-amino-2-methyl-5-(phosphooxymethyl)pyrimidine + CO + 5'-deoxyadenosine + formate + L-methionine + 3 H(+). It participates in cofactor biosynthesis; thiamine diphosphate biosynthesis. In terms of biological role, catalyzes the synthesis of the hydroxymethylpyrimidine phosphate (HMP-P) moiety of thiamine from aminoimidazole ribotide (AIR) in a radical S-adenosyl-L-methionine (SAM)-dependent reaction. The protein is Phosphomethylpyrimidine synthase of Citrobacter koseri (strain ATCC BAA-895 / CDC 4225-83 / SGSC4696).